We begin with the raw amino-acid sequence, 426 residues long: MLKKLYFTVLSFIAIVGVISLYIRLSEGMKMSALTSYSSWGLWIVFYIYFIGLSAGSFLLSTMVYVFNMKQFERIGKLALFTAFFSLMAGLLFVLIDLGHPERFWHTLVYRQPNSILSWEIQFYLIYMLLIVAEIWFLMREEFAQRAQSTKGLTKLFNRTLTLGYKVPNSQQKLEFHREQSHKWMKILGIAGIPTAVGVHGGTGSLFGVVMAKEYWFSGLTPIIFLVSALVSGAALMLFLYSFFGGAKKNGDSLLKELGTLLTLFIGIDLLLMIAEFLIGLYNPIHHERMTFNEILFGDRWFIFWIGQIGMVIILPILLITISKGKRLLMGLAGLSVVLGIVCVRWILVIPAYVAPHFDGLDSAYNSSRLLYEYSPNLLEWSSSVGLIGIVILLFSITVQLVPVFNKQKEVHQTHGKPTPEIHIKA.

Transmembrane regions (helical) follow at residues 5–25, 40–60, 78–98, 119–139, 187–207, 223–243, 261–281, 302–322, 330–350, and 385–405; these read LYFT…YIRL, WGLW…SFLL, LALF…LIDL, WEIQ…WFLM, ILGI…GSLF, IIFL…LYSF, LLTL…LIGL, FIFW…LITI, MGLA…ILVI, and VGLI…VPVF.

This sequence belongs to the NrfD family. In terms of assembly, the complex is composed of three subunits: SrdA, SrdB and SrdC.

The protein resides in the cell membrane. It carries out the reaction selenite + a quinone + H2O = selenate + a quinol. Its function is as follows. Component of the respiratory selenate reductase complex, which catalyzes the reduction of selenate to selenite. This subunit probably receives electrons directly from the membrane quinone pool and transfers the electrons to the iron-sulfur clusters of SrdB. May be the membrane anchor protein subunit of the complex. The chain is Selenate reductase subunit C from Mesobacillus selenatarsenatis (strain DSM 18680 / JCM 14380 / FERM P-15431 / SF-1).